The sequence spans 283 residues: Bifunctional protein FolD (283 aa).

NADP(+) contacts are provided by residues 165–167 (GRG), Thr192, and Val233.

Belongs to the tetrahydrofolate dehydrogenase/cyclohydrolase family. In terms of assembly, homodimer.

The enzyme catalyses (6R)-5,10-methylene-5,6,7,8-tetrahydrofolate + NADP(+) = (6R)-5,10-methenyltetrahydrofolate + NADPH. The catalysed reaction is (6R)-5,10-methenyltetrahydrofolate + H2O = (6R)-10-formyltetrahydrofolate + H(+). The protein operates within one-carbon metabolism; tetrahydrofolate interconversion. Catalyzes the oxidation of 5,10-methylenetetrahydrofolate to 5,10-methenyltetrahydrofolate and then the hydrolysis of 5,10-methenyltetrahydrofolate to 10-formyltetrahydrofolate. In Mycolicibacterium smegmatis (strain ATCC 700084 / mc(2)155) (Mycobacterium smegmatis), this protein is Bifunctional protein FolD.